The primary structure comprises 159 residues: Protein UXT homolog (159 aa).

This sequence belongs to the UXT family.

This Nematostella vectensis (Starlet sea anemone) protein is Protein UXT homolog.